Consider the following 632-residue polypeptide: Tail spike protein (632 aa).

In terms of domain architecture, Peptidase S74 spans 505–630 (SDARCKTEPL…KRMQEALAAL (126 aa)).

In terms of assembly, homotrimer. Proteolytic cleavage and release of the chaperone in the host cytosol stabilizes the folded protein. The cleavage gives rise to the mature tail spike protein but is not essential for catalytic activity.

It localises to the virion. Its function is as follows. Functions as a receptor binding protein (RBP) and probably mediates the attachment to the host capsular exopolysaccharides. Displays a depolymerase activity that specifically degrades the K5-type polysaccharides of Escherichia coli capsule. Functionally, the C-terminal chaperone protein mediates homotrimerization and proper folding of the catalytic trimer. The sequence is that of Tail spike protein (kflA) from Escherichia virus K5 (Bacteriophage K5).